We begin with the raw amino-acid sequence, 328 residues long: DNA-directed RNA polymerase subunit alpha (328 aa).

Residues 1 to 231 (MIYQMQMPAK…EHVTFFADFS (231 aa)) form an alpha N-terminal domain (alpha-NTD) region. The tract at residues 252-328 (MRKLFNTKIE…MDITKYQMKG (77 aa)) is alpha C-terminal domain (alpha-CTD).

The protein belongs to the RNA polymerase alpha chain family. Homodimer. The RNAP catalytic core consists of 2 alpha, 1 beta, 1 beta' and 1 omega subunit. When a sigma factor is associated with the core the holoenzyme is formed, which can initiate transcription.

It catalyses the reaction RNA(n) + a ribonucleoside 5'-triphosphate = RNA(n+1) + diphosphate. Its function is as follows. DNA-dependent RNA polymerase catalyzes the transcription of DNA into RNA using the four ribonucleoside triphosphates as substrates. In Chlorobium limicola (strain DSM 245 / NBRC 103803 / 6330), this protein is DNA-directed RNA polymerase subunit alpha.